The following is a 419-amino-acid chain: MRISGIDAAKALQALAGRLPTPRRASLARLTDTDGGALDHALILWFPGPATATGEDLAELHLHGGRAVVAAVEAALAAMPGLRRAEAGEFTRRAFANGRIDLAEAEGLADLLAAETESQRVQALDHASGHVSRAVAGWQARLLALMAAAEAELNFADEDDVEVGEGVAQRVSEGMAALAGELGEWLARPAAEVIAEGLSVVIAGPPNAGKSTLINALAQRELAIVSPVAGTTRDVIETPLALDGIAMRFSDTAGLRGESADAIEMIGIDRAKAAVEGADILLWLGAPKEAPEHPRTILIAAQADRWRGDAAAEAEAAHCDLILSAATGEGMDRLHTMIVEMARTLLPREGEATLRQRQRDALAEAKGWLEVETGSREAGDLILLAERLRLAGATLDRITGRGGVEDMLDTLFGRFCIGK.

(6S)-5-formyl-5,6,7,8-tetrahydrofolate is bound by residues R2, E59, and R99. The TrmE-type G domain occupies G197–R343. N207 lines the K(+) pocket. Residues N207–T212, S226–T232, and D251–G254 contribute to the GTP site. S211 contacts Mg(2+). K(+) contacts are provided by S226, V228, and T231. T232 provides a ligand contact to Mg(2+). K419 lines the (6S)-5-formyl-5,6,7,8-tetrahydrofolate pocket.

This sequence belongs to the TRAFAC class TrmE-Era-EngA-EngB-Septin-like GTPase superfamily. TrmE GTPase family. In terms of assembly, homodimer. Heterotetramer of two MnmE and two MnmG subunits. K(+) is required as a cofactor.

The protein localises to the cytoplasm. Exhibits a very high intrinsic GTPase hydrolysis rate. Involved in the addition of a carboxymethylaminomethyl (cmnm) group at the wobble position (U34) of certain tRNAs, forming tRNA-cmnm(5)s(2)U34. This is tRNA modification GTPase MnmE from Sphingopyxis alaskensis (strain DSM 13593 / LMG 18877 / RB2256) (Sphingomonas alaskensis).